Here is a 339-residue protein sequence, read N- to C-terminus: HTH-type transcriptional regulator KdgR (339 aa).

The region spanning 9 to 64 is the HTH lacI-type domain; it reads TTIKDVAECAGVSKSTVSRYINGKIDAISPEKVKNIKKAIAELNYRPSKMAQGLKI. Residues 11–30 constitute a DNA-binding region (H-T-H motif); it reads IKDVAECAGVSKSTVSRYIN.

Functionally, transcriptional repressor of the kdgRKAT and kduID operons for pectin utilization. This Bacillus subtilis (strain 168) protein is HTH-type transcriptional regulator KdgR (kdgR).